We begin with the raw amino-acid sequence, 138 residues long: Large ribosomal subunit protein uL16 (138 aa).

Residues 1 to 13 (MLQPSRRKFRKEQ) are compositionally biased toward basic residues. The tract at residues 1 to 20 (MLQPSRRKFRKEQKGRNTGV) is disordered.

This sequence belongs to the universal ribosomal protein uL16 family. In terms of assembly, part of the 50S ribosomal subunit.

Its function is as follows. Binds 23S rRNA and is also seen to make contacts with the A and possibly P site tRNAs. The polypeptide is Large ribosomal subunit protein uL16 (Leptothrix cholodnii (strain ATCC 51168 / LMG 8142 / SP-6) (Leptothrix discophora (strain SP-6))).